The sequence spans 360 residues: U7 snRNA-associated Sm-like protein LSm11 (360 aa).

A disordered region spans residues 1–29 (MEERERGARSAGAGSPARPPSPRLDVSSD). Phosphoserine occurs at positions 15 and 21. Arg41 carries the post-translational modification Omega-N-methylarginine. The disordered stretch occupies residues 68–143 (RGGGRGRGRA…PGRSRKAPRN (76 aa)). Low complexity predominate over residues 78–94 (RGAAAGSGVPAAPGPSG). Lys120 is covalently cross-linked (Glycyl lysine isopeptide (Lys-Gly) (interchain with G-Cter in SUMO2)). Ser154 carries the post-translational modification Phosphoserine. Residues 154–229 (SPLGELHRCI…LTLTRLFDRL (76 aa)) form the Sm domain. The segment at 171-204 (VHIRTFKGLRGVCTGFLVAFDKFWNMALTDVDET) is SM 1. Residues 268 to 333 (ADTGRGSHKR…SRKKKRKPKV (66 aa)) form a disordered region. Residue Ser280 is modified to Phosphoserine. Over residues 299 to 322 (GRTTRTDGSSVGGTFSRATTLSRG) the composition is skewed to polar residues. Residues 343-356 (INQIFIRGENVLLV) form an SM 2 region.

The protein belongs to the snRNP Sm proteins family. In terms of assembly, component of the heptameric ring U7 snRNP complex, or U7 Sm protein core complex, at least composed of LSM10, LSM11, SNRPB, SNRPD3, SNRPE, SNRPF, SNRPG and U7 snRNA. Formation of the U7 snRNP is an ATP-dependent process mediated by a specialized SMN complex containing at least the Sm protein core complex and additionally, the U7-specific LSM10 and LSM11 proteins. Identified in a histone pre-mRNA complex, at least composed of ERI1, LSM11, SLBP, SNRPB, SYNCRIP and YBX1. Interacts (via the Sm domains) with CLNS1A. Interacts with SMN and ZNF473. Interacts with PRMT5 and WDR77.

The protein resides in the nucleus. Its function is as follows. Component of the U7 snRNP complex that is involved in the histone 3'-end pre-mRNA processing. Increases U7 snRNA levels but not histone 3'-end pre-mRNA processing activity, when overexpressed. Required for cell cycle progression from G1 to S phases. Binds specifically to the Sm-binding site of U7 snRNA. This Homo sapiens (Human) protein is U7 snRNA-associated Sm-like protein LSm11.